We begin with the raw amino-acid sequence, 388 residues long: Type II secretion system protein F (388 aa).

Residues 1–28 (MTEGDSARQVRQQLREQGLTPLEVNETT) are disordered. Topologically, residues 1–153 (MTEGDSARQV…HMRTKLLQAM (153 aa)) are cytoplasmic. Glu-79, Asn-133, and Asp-137 together coordinate Ca(2+). The helical transmembrane segment at 154-174 (IYPIVLTLVAVGVISILLTAV) threads the bilayer. Over 175 to 205 (VPKVVAQFEHMGQQLPATTRFLIGTSELMQH) the chain is Periplasmic. Residues 206 to 226 (YGLWFLLLLFIGGFVWRWWLT) traverse the membrane as a helical segment. Topologically, residues 227-350 (DEKRRRHWHQ…QDREFETQVN (124 aa)) are cytoplasmic. The chain crosses the membrane as a helical span at residues 351–371 (IALGVFEPLLVVSMAGVVLFI). Residues 372–388 (VMSILQPILELNNMVNL) lie on the Periplasmic side of the membrane.

It belongs to the GSP F family. As to quaternary structure, type II secretion system is composed of four main components: the outer membrane complex, the inner membrane complex, the cytoplasmic secretion ATPase and the periplasm-spanning pseudopilus. Homodimer. Interacts with ExeE and ExeL components.

The protein resides in the cell inner membrane. In terms of biological role, component of the type II secretion system inner membrane complex required for the energy-dependent secretion of extracellular factors such as proteases and toxins from the periplasm. The chain is Type II secretion system protein F (exeF) from Aeromonas hydrophila.